The chain runs to 1148 residues: Pyruvate carboxylase (1148 aa).

The Biotin carboxylation domain maps to 1 to 457 (MSQQSIQKVL…DTSFIDTTPE (457 aa)). Lys-121, Glu-205, and His-240 together coordinate ATP. In terms of domain architecture, ATP-grasp spans 125–321 (REQAEKAGIP…IVQTQILVAQ (197 aa)). Lys-242 is a catalytic residue. Residues 534 to 802 (VLLTDTTFRD…RPEMNVQGVE (269 aa)) form the Pyruvate carboxyltransferase domain. Substrate is bound by residues 542 to 546 (RDAHQ) and Arg-615. Residue Asp-543 coordinates a divalent metal cation. Residues Lys-712, His-741, and His-743 each contribute to the a divalent metal cation site. An N6-carboxylysine modification is found at Lys-712. Thr-876 contacts substrate. Residues 1071-1146 (KADRTNPSHI…QTGDLLLEIE (76 aa)) form the Biotinyl-binding domain. At Lys-1112 the chain carries N6-biotinyllysine.

Homotetramer. At very low potassium concentrations, when intracellular levels of c-di-AMP are low, interacts with apo-DarB. c-di-AMP inhibits the binding of DarB to PYC. Does not bind directly c-di-AMP. Biotin is required as a cofactor.

The enzyme catalyses hydrogencarbonate + pyruvate + ATP = oxaloacetate + ADP + phosphate + H(+). Activated by the cyclic di-AMP (c-di-AMP) receptor DarB in the absence of c-di-AMP. Allosterically activated by acetyl-CoA. Inhibited by the biotin-complexing protein avidin. Its function is as follows. Catalyzes a 2-step reaction, involving the ATP-dependent carboxylation of the covalently attached biotin in the first step and the transfer of the carboxyl group to pyruvate in the second, leading to oxaloacetate production. Fulfills an anaplerotic function in B.subtilis as it is necessary for growth on glucose, but is not required for sporulation. The chain is Pyruvate carboxylase (pyc) from Bacillus subtilis (strain 168).